The sequence spans 66 residues: Small ribosomal subunit protein bS21 (66 aa).

It belongs to the bacterial ribosomal protein bS21 family.

The protein is Small ribosomal subunit protein bS21 of Rickettsia felis (strain ATCC VR-1525 / URRWXCal2) (Rickettsia azadi).